The following is a 127-amino-acid chain: Aspartate 1-decarboxylase (127 aa).

S25 functions as the Schiff-base intermediate with substrate; via pyruvic acid in the catalytic mechanism. At S25 the chain carries Pyruvic acid (Ser). T57 is a substrate binding site. The active-site Proton donor is Y58. 73 to 75 (GAA) contacts substrate.

This sequence belongs to the PanD family. Heterooctamer of four alpha and four beta subunits. Pyruvate serves as cofactor. In terms of processing, is synthesized initially as an inactive proenzyme, which is activated by self-cleavage at a specific serine bond to produce a beta-subunit with a hydroxyl group at its C-terminus and an alpha-subunit with a pyruvoyl group at its N-terminus.

The protein resides in the cytoplasm. It catalyses the reaction L-aspartate + H(+) = beta-alanine + CO2. The protein operates within cofactor biosynthesis; (R)-pantothenate biosynthesis; beta-alanine from L-aspartate: step 1/1. Its function is as follows. Catalyzes the pyruvoyl-dependent decarboxylation of aspartate to produce beta-alanine. This chain is Aspartate 1-decarboxylase, found in Listeria monocytogenes serotype 4b (strain CLIP80459).